A 538-amino-acid chain; its full sequence is Putative outer membrane porin BglH (538 aa).

Positions 1–25 (MFRRNLITSAILLMAPLAFSAQSLA) are cleaved as a signal peptide. The segment at 52-82 (KDEEKKKYTPATVNRSVSTNDQGYAANPFPT) is disordered. Polar residues predominate over residues 62 to 73 (ATVNRSVSTNDQ).

It belongs to the porin LamB (TC 1.B.3) family.

The protein localises to the cell outer membrane. In terms of biological role, may be a sugar porin with a broad carbohydrate specificity. This is Putative outer membrane porin BglH (bglH) from Shigella flexneri serotype 5b (strain 8401).